Reading from the N-terminus, the 154-residue chain is Myoglobin (154 aa).

One can recognise a Globin domain in the interval 2–148; the sequence is GLSDGEWQLV…FRNEMAAQYK (147 aa). Phosphoserine is present on Ser-4. His-65 is a binding site for nitrite. His-65 lines the O2 pocket. A Phosphothreonine modification is found at Thr-68. Residue His-94 coordinates heme b.

Monomeric.

It is found in the cytoplasm. Its subcellular location is the sarcoplasm. The enzyme catalyses Fe(III)-heme b-[protein] + nitric oxide + H2O = Fe(II)-heme b-[protein] + nitrite + 2 H(+). The catalysed reaction is H2O2 + AH2 = A + 2 H2O. Monomeric heme protein which primary function is to store oxygen and facilitate its diffusion within muscle tissues. Reversibly binds oxygen through a pentacoordinated heme iron and enables its timely and efficient release as needed during periods of heightened demand. Depending on the oxidative conditions of tissues and cells, and in addition to its ability to bind oxygen, it also has a nitrite reductase activity whereby it regulates the production of bioactive nitric oxide. Under stress conditions, like hypoxia and anoxia, it also protects cells against reactive oxygen species thanks to its pseudoperoxidase activity. This Bubalus bubalis (Domestic water buffalo) protein is Myoglobin.